A 237-amino-acid polypeptide reads, in one-letter code: Ditrans,polycis-undecaprenyl-diphosphate synthase ((2E,6E)-farnesyl-diphosphate specific) (237 aa).

Residue Asp-11 is part of the active site. Asp-11 contributes to the Mg(2+) binding site. Substrate is bound by residues 12 to 15 (GNGR), Trp-16, Arg-24, His-28, and 56 to 58 (SIE). The Proton acceptor role is filled by Asn-59. Substrate is bound by residues Arg-62, Arg-179, and 185-187 (RLS). Mg(2+) is bound at residue Glu-198.

Belongs to the UPP synthase family. In terms of assembly, homodimer. The cofactor is Mg(2+).

It catalyses the reaction 8 isopentenyl diphosphate + (2E,6E)-farnesyl diphosphate = di-trans,octa-cis-undecaprenyl diphosphate + 8 diphosphate. Its function is as follows. Catalyzes the sequential condensation of isopentenyl diphosphate (IPP) with (2E,6E)-farnesyl diphosphate (E,E-FPP) to yield (2Z,6Z,10Z,14Z,18Z,22Z,26Z,30Z,34E,38E)-undecaprenyl diphosphate (di-trans,octa-cis-UPP). UPP is the precursor of glycosyl carrier lipid in the biosynthesis of bacterial cell wall polysaccharide components such as peptidoglycan and lipopolysaccharide. The polypeptide is Ditrans,polycis-undecaprenyl-diphosphate synthase ((2E,6E)-farnesyl-diphosphate specific) (Coxiella burnetii (strain RSA 493 / Nine Mile phase I)).